A 143-amino-acid polypeptide reads, in one-letter code: Transcriptional regulator MraZ (143 aa).

SpoVT-AbrB domains are found at residues 5–47 (TYTP…PKEE) and 76–119 (ADEQ…DAQA).

The protein belongs to the MraZ family. In terms of assembly, forms oligomers.

Its subcellular location is the cytoplasm. The protein resides in the nucleoid. The protein is Transcriptional regulator MraZ of Corynebacterium glutamicum (strain R).